The following is a 444-amino-acid chain: Xylose isomerase (444 aa).

Active-site residues include H101 and D104. Positions 232, 268, 271, 296, 307, 309, and 339 each coordinate Mg(2+).

The protein belongs to the xylose isomerase family. As to quaternary structure, homotetramer. The cofactor is Mg(2+).

The protein resides in the cytoplasm. The catalysed reaction is alpha-D-xylose = alpha-D-xylulofuranose. The sequence is that of Xylose isomerase from Thermotoga maritima (strain ATCC 43589 / DSM 3109 / JCM 10099 / NBRC 100826 / MSB8).